Here is a 98-residue protein sequence, read N- to C-terminus: uncharacterized protein (98 aa).

This is an uncharacterized protein from Schizosaccharomyces pombe (strain 972 / ATCC 24843) (Fission yeast).